Consider the following 463-residue polypeptide: Phosphoglycerate transporter protein (463 aa).

Residues 1–29 (MLTILKTGQSAHKVPPEKVQATYGRYRIQ) are Cytoplasmic-facing. 12 helical membrane-spanning segments follow: residues 30–50 (ALLS…NFTL), 59–79 (LDLS…AYGI), 106–126 (IVNV…LVVF), 127–147 (NGLF…NWFP), 160–180 (ISHN…FAIL), 188–208 (ASYI…LVLG), 267–287 (VFVY…LLTV), 297–317 (VAFL…GWLS), 326–346 (MPLA…YWKS), 349–369 (LLMV…PQFL), 391–411 (GFMS…VMVD), and 413–433 (LGWY…ILFC).

The protein belongs to the major facilitator superfamily. Organophosphate:Pi antiporter (OPA) (TC 2.A.1.4) family.

Its subcellular location is the cell inner membrane. Its function is as follows. The phosphoglycerate transporter protein is a part of the PGT transport system. It is the membrane bound transporter for phosphoglycerate into salmonella. The chain is Phosphoglycerate transporter protein (pgtP) from Salmonella typhimurium (strain LT2 / SGSC1412 / ATCC 700720).